A 457-amino-acid polypeptide reads, in one-letter code: Reticulon-like protein B18 (457 aa).

Residues Ala94–Val183 form a disordered region. Residues Leu124–Thr136 show a composition bias toward basic and acidic residues. Basic residues predominate over residues Asn149–Lys163. Residues Ser166–Val183 are compositionally biased toward low complexity. The 191-residue stretch at Ile195 to Thr385 folds into the Reticulon domain. Transmembrane regions (helical) follow at residues Thr208 to Phe228, Phe230 to Ser250, Tyr314 to Ile334, and Phe377 to Ile397. Residues Asp407 to Tyr457 are disordered. Positions Glu413–Glu439 are enriched in basic and acidic residues.

The protein resides in the endoplasmic reticulum membrane. The protein is Reticulon-like protein B18 (RTNLB18) of Arabidopsis thaliana (Mouse-ear cress).